A 131-amino-acid polypeptide reads, in one-letter code: Superoxide dismutase [Ni] (131 aa).

Residues M1–A14 constitute a propeptide that is removed on maturation. The Ni(2+) site is built by H15, C16, and C20.

It belongs to the nickel superoxide dismutase family. In terms of assembly, homohexamer. The hexameric protein has a roughly the shape of a hollow sphere with an outer diameter of 60 angstroms and a large interior cavity. It depends on Ni(2+) as a cofactor.

The protein localises to the cytoplasm. The enzyme catalyses 2 superoxide + 2 H(+) = H2O2 + O2. The chain is Superoxide dismutase [Ni] (sodN) from Streptomyces coelicolor (strain ATCC BAA-471 / A3(2) / M145).